Reading from the N-terminus, the 414-residue chain is MRITKIFKDYRLFEIFILGIVSGMPLVIIFSTLAVWLKESGIDIAVITTFAVARLSYSLKVFWSPLVDNFKIPFLSRWGHRKSWLILCSSLMALVLIAMSKENPEVSLTSFYFLTILLGFLSSTFDIAVDALRIDKFDQETQSIASATAVFGYRIGMLITGAGALYLAEITGNNWQLTFCVIAIIFVVATIFIITVNEKELVREKINIISITSWISTVINPFKDFFKREFAVTILLAVIFFKLGDAMLGAVASPFYIELGYTKGEIAIIAKLYGLIATLVGGFVGGIVMYRVGNFKGLIITGIAQSLTHFAFIWLNHQPPSFEALLIAITIENFAAAMGATALVGYIGNLCNKKYSATQYALLSSASSLCNNTVTIYAGKLVNMMGWDGFFLFTIILALPALFILMYLNTKVNV.

12 helical membrane passes run 15–35, 44–63, 84–104, 109–129, 150–170, 177–197, 230–250, 268–288, 295–315, 324–344, 360–379, and 389–409; these read IFIL…TLAV, IAVI…KVFW, WLIL…KENP, TSFY…DIAV, VFGY…LAEI, LTFC…ITVN, FAVT…MLGA, IIAK…GGIV, FKGL…FIWL, ALLI…TALV, YALL…IYAG, and GFFL…MYLN.

This sequence belongs to the major facilitator superfamily.

Its subcellular location is the cell inner membrane. In Rickettsia conorii (strain ATCC VR-613 / Malish 7), this protein is Putative transporter AmpG 4 (ampG4).